Reading from the N-terminus, the 77-residue chain is MEKLTILLLVAAVLMSTQALIQHDGEKSQKAKMKFLTARTLSAKTRGVDCVGLSSYCGPWNNPPCCSWYTCDYYCKF.

A signal peptide spans 1 to 19; sequence MEKLTILLLVAAVLMSTQA. Positions 20–46 are excised as a propeptide; sequence LIQHDGEKSQKAKMKFLTARTLSAKTR. 3 cysteine pairs are disulfide-bonded: C50–C66, C57–C71, and C65–C75.

This sequence belongs to the conotoxin O2 superfamily. As to expression, expressed by the venom duct.

It is found in the secreted. The sequence is that of Conotoxin VnMEKL-0111 from Conus ventricosus (Mediterranean cone).